Consider the following 199-residue polypeptide: Elongation factor Ts (199 aa).

An involved in Mg(2+) ion dislocation from EF-Tu region spans residues 82–85; that stretch reads TDFV.

The protein belongs to the EF-Ts family.

It is found in the cytoplasm. Associates with the EF-Tu.GDP complex and induces the exchange of GDP to GTP. It remains bound to the aminoacyl-tRNA.EF-Tu.GTP complex up to the GTP hydrolysis stage on the ribosome. This chain is Elongation factor Ts, found in Leptospira interrogans serogroup Icterohaemorrhagiae serovar Lai (strain 56601).